The following is a 369-amino-acid chain: Ubiquinone biosynthesis protein COQ4, mitochondrial (369 aa).

A mitochondrion-targeting transit peptide spans 1–35; the sequence is MLTSQKVSRVLLHSSFLKTPVSTQSRSFVFTTIAT. Zn(2+) is bound by residues His212, Asp213, His216, and Glu228. Residues 329–360 show a composition bias toward low complexity; the sequence is AAAAATVTQRQRQQQRATATAANATSASSANV. The tract at residues 329 to 369 is disordered; sequence AAAAATVTQRQRQQQRATATAANATSASSANVKPSNTAGAM.

Belongs to the COQ4 family. In terms of assembly, component of a multi-subunit COQ enzyme complex, composed of at least COQ3, COQ4, COQ5, COQ6, COQ7 and COQ9. The cofactor is Zn(2+).

The protein localises to the mitochondrion inner membrane. It carries out the reaction a 4-hydroxy-3-methoxy-5-(all-trans-polyprenyl)benzoate + H(+) = a 2-methoxy-6-(all-trans-polyprenyl)phenol + CO2. Its pathway is cofactor biosynthesis; ubiquinone biosynthesis. Functionally, lyase that catalyzes the C1-decarboxylation of 4-hydroxy-3-methoxy-5-(all-trans-polyprenyl)benzoic acid into 2-methoxy-6-(all-trans-polyprenyl)phenol during ubiquinone biosynthesis. The polypeptide is Ubiquinone biosynthesis protein COQ4, mitochondrial (Lodderomyces elongisporus (strain ATCC 11503 / CBS 2605 / JCM 1781 / NBRC 1676 / NRRL YB-4239) (Yeast)).